The sequence spans 40 residues: Sulfur globule protein TR0 (40 aa).

This sequence to C.vinosum CV1 and CV2. The protein envelope of the sulfur globules is composed of the three different proteins TR0, TR1 and TR2.

Structural protein of the sulfur globules, which are intracellular globules that serve for sulfur storage in purple sulfur bacteria. The chain is Sulfur globule protein TR0 from Thiocapsa roseopersicina.